Consider the following 429-residue polypeptide: Phosphomethylpyrimidine synthase (429 aa).

Substrate is bound by residues asparagine 66, methionine 95, tyrosine 124, histidine 163, 185–187 (SRG), 226–229 (DGLR), and glutamate 265. Residue histidine 269 coordinates Zn(2+). Residue tyrosine 292 participates in substrate binding. Histidine 333 serves as a coordination point for Zn(2+). Residues cysteine 409, cysteine 412, and cysteine 416 each coordinate [4Fe-4S] cluster.

It belongs to the ThiC family. [4Fe-4S] cluster serves as cofactor.

The catalysed reaction is 5-amino-1-(5-phospho-beta-D-ribosyl)imidazole + S-adenosyl-L-methionine = 4-amino-2-methyl-5-(phosphooxymethyl)pyrimidine + CO + 5'-deoxyadenosine + formate + L-methionine + 3 H(+). It participates in cofactor biosynthesis; thiamine diphosphate biosynthesis. In terms of biological role, catalyzes the synthesis of the hydroxymethylpyrimidine phosphate (HMP-P) moiety of thiamine from aminoimidazole ribotide (AIR) in a radical S-adenosyl-L-methionine (SAM)-dependent reaction. The chain is Phosphomethylpyrimidine synthase from Carboxydothermus hydrogenoformans (strain ATCC BAA-161 / DSM 6008 / Z-2901).